We begin with the raw amino-acid sequence, 401 residues long: Phosphoglycerate kinase (401 aa).

Substrate contacts are provided by residues 21–23, Arg36, 59–62, Arg119, and Arg160; these read DFN and HLGR. ATP contacts are provided by residues Lys212, Glu330, and 357–360; that span reads GGDS.

The protein belongs to the phosphoglycerate kinase family. In terms of assembly, monomer.

The protein resides in the cytoplasm. The enzyme catalyses (2R)-3-phosphoglycerate + ATP = (2R)-3-phospho-glyceroyl phosphate + ADP. It functions in the pathway carbohydrate degradation; glycolysis; pyruvate from D-glyceraldehyde 3-phosphate: step 2/5. The sequence is that of Phosphoglycerate kinase from Limosilactobacillus fermentum (strain NBRC 3956 / LMG 18251) (Lactobacillus fermentum).